Here is a 509-residue protein sequence, read N- to C-terminus: Maturase K (509 aa).

Belongs to the intron maturase 2 family. MatK subfamily.

The protein resides in the plastid. The protein localises to the chloroplast. Its function is as follows. Usually encoded in the trnK tRNA gene intron. Probably assists in splicing its own and other chloroplast group II introns. In Nicotiana tomentosiformis (Tobacco), this protein is Maturase K.